A 229-amino-acid chain; its full sequence is MPLNEPSSNAFPRTVLFDLDGTLLDSAPDMLATANAMLAARGRAPITLAQLRPVISIGTFRILAVAFPELDAAAIQGLIPEFLQRYEALIGSVSKPFDGVEMMLDALECAGTVWGIVTNKPEFLARLILPLLGWTSRCAVLIGGDTLAERKPHPLPLLTAAERIGVMPTDCVYVGDDVSDIQAARAAGMPSMVALWGYRSHEDNPMTWQADTLVEQPHLLSRPDVWPST.

The active-site Nucleophile is the Asp18. Mg(2+)-binding residues include Asp18, Asp20, and Asp176.

This sequence belongs to the HAD-like hydrolase superfamily. CbbY/CbbZ/Gph/YieH family. Requires Mg(2+) as cofactor.

The enzyme catalyses 2-phosphoglycolate + H2O = glycolate + phosphate. It participates in organic acid metabolism; glycolate biosynthesis; glycolate from 2-phosphoglycolate: step 1/1. Functionally, specifically catalyzes the dephosphorylation of 2-phosphoglycolate. Is involved in the dissimilation of the intracellular 2-phosphoglycolate formed during the DNA repair of 3'-phosphoglycolate ends, a major class of DNA lesions induced by oxidative stress. The protein is Phosphoglycolate phosphatase of Xylella fastidiosa (strain 9a5c).